Here is a 427-residue protein sequence, read N- to C-terminus: Enolase (427 aa).

Residue glutamine 163 participates in (2R)-2-phosphoglycerate binding. Catalysis depends on glutamate 205, which acts as the Proton donor. Aspartate 242, glutamate 285, and aspartate 312 together coordinate Mg(2+). (2R)-2-phosphoglycerate-binding residues include lysine 337, arginine 366, serine 367, and lysine 388. The active-site Proton acceptor is lysine 337.

This sequence belongs to the enolase family. Mg(2+) is required as a cofactor.

Its subcellular location is the cytoplasm. It is found in the secreted. The protein resides in the cell surface. It carries out the reaction (2R)-2-phosphoglycerate = phosphoenolpyruvate + H2O. It participates in carbohydrate degradation; glycolysis; pyruvate from D-glyceraldehyde 3-phosphate: step 4/5. Its function is as follows. Catalyzes the reversible conversion of 2-phosphoglycerate (2-PG) into phosphoenolpyruvate (PEP). It is essential for the degradation of carbohydrates via glycolysis. The chain is Enolase from Paraburkholderia phytofirmans (strain DSM 17436 / LMG 22146 / PsJN) (Burkholderia phytofirmans).